The primary structure comprises 515 residues: Arabinose import ATP-binding protein AraG 2 (515 aa).

Residues M1 to G22 form a disordered region. ABC transporter domains lie at L25–R260 and R260–L511. G57–S64 is a binding site for ATP.

This sequence belongs to the ABC transporter superfamily. Arabinose importer (TC 3.A.1.2.2) family. The complex is composed of two ATP-binding proteins (AraG), two transmembrane proteins (AraH) and a solute-binding protein (AraF).

The protein localises to the cell inner membrane. It catalyses the reaction L-arabinose(out) + ATP + H2O = L-arabinose(in) + ADP + phosphate + H(+). In terms of biological role, part of the ABC transporter complex AraFGH involved in arabinose import. Responsible for energy coupling to the transport system. The protein is Arabinose import ATP-binding protein AraG 2 of Burkholderia cenocepacia (strain HI2424).